Reading from the N-terminus, the 967-residue chain is Cytosolic carboxypeptidase 2 (967 aa).

The Peptidase M14 domain occupies 330–601; it reads YPYTYSDLQR…HFCDTLLDYC (272 aa). Residues His-396, Glu-399, and His-492 each contribute to the Zn(2+) site. Glu-565 acts as the Proton donor/acceptor in catalysis. Disordered stretches follow at residues 679–706 and 944–967; these read KRRL…LHEA and PGIS…NTMK. A compositionally biased stretch (polar residues) spans 946-967; that stretch reads ISSSEPHFPNSSEDITVRNTMK.

Belongs to the peptidase M14 family. Requires Zn(2+) as cofactor.

The protein localises to the cytoplasm. The protein resides in the cytosol. It is found in the cytoskeleton. It localises to the microtubule organizing center. Its subcellular location is the centrosome. The protein localises to the centriole. The protein resides in the cilium basal body. It carries out the reaction (L-glutamyl)(n+1)-gamma-L-glutamyl-L-glutamyl-[protein] + H2O = (L-glutamyl)(n)-gamma-L-glutamyl-L-glutamyl-[protein] + L-glutamate. Its function is as follows. Metallocarboxypeptidase that mediates deglutamylation of target proteins. Catalyzes the deglutamylation of polyglutamate side chains generated by post-translational polyglutamylation in proteins such as tubulins. Also removes gene-encoded polyglutamates from the carboxy-terminus of target proteins such as MYLK. Does not show detyrosinase or deglycylase activities from the carboxy-terminus of tubulin. In terms of biological role, metallocarboxypeptidase that mediates deglutamylation of tubulin and non-tubulin target proteins. Catalyzes the removal of polyglutamate side chains present on the gamma-carboxyl group of glutamate residues within the C-terminal tail of tubulin protein. Specifically cleaves tubulin long-side-chains, while it is not able to remove the branching point glutamate. Also catalyzes the removal of polyglutamate residues from the carboxy-terminus of non-tubulin proteins. This chain is Cytosolic carboxypeptidase 2 (agbl2), found in Xenopus tropicalis (Western clawed frog).